The following is a 289-amino-acid chain: Diaminopimelate epimerase (289 aa).

Substrate-binding residues include N13, Q47, and N67. The active-site Proton donor is C76. Substrate contacts are provided by residues 77 to 78 (GN), N167, N200, and 218 to 219 (ER). The active-site Proton acceptor is C227. Position 228–229 (228–229 (GT)) interacts with substrate.

This sequence belongs to the diaminopimelate epimerase family. In terms of assembly, homodimer.

It localises to the cytoplasm. It carries out the reaction (2S,6S)-2,6-diaminopimelate = meso-2,6-diaminopimelate. It functions in the pathway amino-acid biosynthesis; L-lysine biosynthesis via DAP pathway; DL-2,6-diaminopimelate from LL-2,6-diaminopimelate: step 1/1. Functionally, catalyzes the stereoinversion of LL-2,6-diaminopimelate (L,L-DAP) to meso-diaminopimelate (meso-DAP), a precursor of L-lysine and an essential component of the bacterial peptidoglycan. The chain is Diaminopimelate epimerase from Burkholderia vietnamiensis (strain G4 / LMG 22486) (Burkholderia cepacia (strain R1808)).